The sequence spans 131 residues: MSMSDPIADMLTRIRNAQQVEKMAVSMPSSKVKVAIAKVLKDEGYIEDFAVRGEAGKPELELQLKYYAGRPVIEHIERVSKPGLRIYKGAGDLPRVKNGLGVAIVSTSSGVMTDRHARAKGVGGEVLCFVA.

Belongs to the universal ribosomal protein uS8 family. As to quaternary structure, part of the 30S ribosomal subunit. Contacts proteins S5 and S12.

In terms of biological role, one of the primary rRNA binding proteins, it binds directly to 16S rRNA central domain where it helps coordinate assembly of the platform of the 30S subunit. In Thiobacillus denitrificans (strain ATCC 25259 / T1), this protein is Small ribosomal subunit protein uS8.